Here is a 224-residue protein sequence, read N- to C-terminus: Ribose-5-phosphate isomerase A (224 aa).

Substrate is bound by residues 26 to 29 (TGST), 81 to 84 (DGAD), and 94 to 97 (KGGG). Glu-103 functions as the Proton acceptor in the catalytic mechanism. Lys-121 is a substrate binding site.

It belongs to the ribose 5-phosphate isomerase family. Homodimer.

The catalysed reaction is aldehydo-D-ribose 5-phosphate = D-ribulose 5-phosphate. The protein operates within carbohydrate degradation; pentose phosphate pathway; D-ribose 5-phosphate from D-ribulose 5-phosphate (non-oxidative stage): step 1/1. Functionally, catalyzes the reversible conversion of ribose-5-phosphate to ribulose 5-phosphate. The protein is Ribose-5-phosphate isomerase A of Listeria monocytogenes serovar 1/2a (strain ATCC BAA-679 / EGD-e).